Reading from the N-terminus, the 137-residue chain is uncharacterized protein (137 aa).

A helical membrane pass occupies residues 4-21 (ISWQIVLAVIGVVAGFII).

The protein localises to the membrane. This is an uncharacterized protein from Archaeoglobus fulgidus (strain ATCC 49558 / DSM 4304 / JCM 9628 / NBRC 100126 / VC-16).